The sequence spans 436 residues: UPF0597 protein YhaM (436 aa).

It belongs to the UPF0597 family.

This is UPF0597 protein YhaM from Shigella flexneri serotype 5b (strain 8401).